The sequence spans 397 residues: NADH-quinone oxidoreductase subunit H 1 (397 aa).

The next 10 helical transmembrane spans lie at 7–27 (FIFI…TTLA), 84–104 (PFLA…GPVI), 120–140 (IGVL…ALAG), 156–176 (SAQM…PLLI), 198–218 (LLSG…AAFA), 258–278 (MITV…APWP), 279–299 (AAYG…LVLL), 313–333 (TFPA…LPMV), 337–357 (LLPL…FMWI), and 376–396 (FLFP…AWTT).

It belongs to the complex I subunit 1 family. As to quaternary structure, NDH-1 is composed of 14 different subunits. Subunits NuoA, H, J, K, L, M, N constitute the membrane sector of the complex.

It is found in the cell inner membrane. The catalysed reaction is a quinone + NADH + 5 H(+)(in) = a quinol + NAD(+) + 4 H(+)(out). In terms of biological role, NDH-1 shuttles electrons from NADH, via FMN and iron-sulfur (Fe-S) centers, to quinones in the respiratory chain. The immediate electron acceptor for the enzyme in this species is believed to be ubiquinone. Couples the redox reaction to proton translocation (for every two electrons transferred, four hydrogen ions are translocated across the cytoplasmic membrane), and thus conserves the redox energy in a proton gradient. This subunit may bind ubiquinone. This chain is NADH-quinone oxidoreductase subunit H 1, found in Solibacter usitatus (strain Ellin6076).